Consider the following 471-residue polypeptide: 7-dehydrocholesterol reductase (471 aa).

8 helical membrane-spanning segments follow: residues Leu36 to Ala56, Leu95 to His115, Leu144 to Phe164, Trp173 to Ile193, Leu233 to Ala253, Val262 to Trp282, Leu302 to Val322, and Gln327 to Phe347. NADP(+) is bound by residues Lys354, Arg358, Leu391, Trp396, and Asn403–Tyr404. The helical transmembrane segment at Leu416–Leu436 threads the bilayer. Residues Asp443, Cys447–Tyr451, and Tyr458 each bind NADP(+).

The protein belongs to the ERG4/ERG24 family. As to quaternary structure, interacts with DHCR24; this interaction regulates DHCR7 activity. Interacts with TMEM147. In terms of tissue distribution, highest expression is detected in liver, followed by kidney and brain.

It is found in the endoplasmic reticulum membrane. The enzyme catalyses cholesterol + NADP(+) = 7-dehydrocholesterol + NADPH + H(+). It carries out the reaction 7-dehydrodesmosterol + NADPH + H(+) = desmosterol + NADP(+). The catalysed reaction is 5,6alpha-epoxy-5alpha-cholestan-3beta-ol + H2O = 5alpha-cholestane-3beta,5,6beta-triol. It catalyses the reaction 5,6beta-epoxy-5beta-cholestan-3beta-ol + H2O = 5alpha-cholestane-3beta,5,6beta-triol. It participates in steroid biosynthesis; cholesterol biosynthesis. In terms of biological role, oxidoreductase that catalyzes the last step of the cholesterol synthesis pathway, which transforms cholesta-5,7-dien-3beta-ol (7-dehydrocholesterol,7-DHC) into cholesterol by reducing the C7-C8 double bond of its sterol core. Can also metabolize cholesta-5,7,24-trien-3beta-ol (7-dehydrodemosterol, 7-DHD) to desmosterol, which is then metabolized by the Delta(24)-sterol reductase (DHCR24) to cholesterol. Modulates ferroptosis (a form of regulated cell death driven by iron-dependent lipid peroxidation) through the metabolic breakdown of the anti-ferroptotic metabolites 7-DHC and 7-DHD which, when accumulated, divert the propagation of peroxyl radical-mediated damage from phospholipid components to its sterol core, protecting plasma and mitochondrial membranes from phospholipid autoxidation. Its function is as follows. Component of the microsomal antiestrogen binding site (AEBS), a multiproteic complex at the ER membrane that consists of an association between cholestenol Delta-isomerase/EBP and DHCR7. This complex is responsible for cholesterol-5,6-epoxide hydrolase (ChEH) activity, which consists in the hydration of cholesterol-5,6-epoxides (5,6-EC) into cholestane-3beta,5alpha,6beta-triol (CT). The precise role of each component of this complex has not been described yet. In Rattus norvegicus (Rat), this protein is 7-dehydrocholesterol reductase (Dhcr7).